The chain runs to 1282 residues: ATP-dependent helicase/nuclease subunit A (1282 aa).

The UvrD-like helicase ATP-binding domain maps to 10–481 (SKWTDSQRQV…IELQENFRSS (472 aa)). Position 31-38 (31-38 (AGAGAGKT)) interacts with ATP. One can recognise a UvrD-like helicase C-terminal domain in the interval 516 to 820 (KPRELYLNED…RLMSIHKSKG (305 aa)).

The protein belongs to the helicase family. AddA subfamily. Heterodimer of AddA and AddB/RexB. Mg(2+) serves as cofactor.

It catalyses the reaction Couples ATP hydrolysis with the unwinding of duplex DNA by translocating in the 3'-5' direction.. The enzyme catalyses ATP + H2O = ADP + phosphate + H(+). The heterodimer acts as both an ATP-dependent DNA helicase and an ATP-dependent, dual-direction single-stranded exonuclease. Recognizes the chi site generating a DNA molecule suitable for the initiation of homologous recombination. The AddA nuclease domain is required for chi fragment generation; this subunit has the helicase and 3' -&gt; 5' nuclease activities. In Natranaerobius thermophilus (strain ATCC BAA-1301 / DSM 18059 / JW/NM-WN-LF), this protein is ATP-dependent helicase/nuclease subunit A.